The sequence spans 309 residues: Assembly-complementing factor 4 (309 aa).

Disordered stretches follow at residues 1 to 80, 164 to 240, and 286 to 309; these read MSED…ASPI, KSIN…ENTP, and VRSE…LFKR. 2 stretches are compositionally biased toward basic and acidic residues: residues 13–24 and 34–44; these read ELHKLSIVDKHS and KQHEVQPESKS. Serine 44, serine 71, serine 74, serine 78, and serine 165 each carry phosphoserine. Positions 61–80 are enriched in polar residues; it reads SSPQRSTTNQSPVSDHASPI. Low complexity-rich tracts occupy residues 174 to 188, 205 to 214, and 222 to 239; these read NNNV…LPNR, PSRSSESTPT, and PRNT…GENT. Acidic residues predominate over residues 287–298; that stretch reads RSEDEDDEEFEP. Serine 288 carries the post-translational modification Phosphoserine.

In terms of biological role, may be involved in actin cytoskeleton organization and biogenesis. In Saccharomyces cerevisiae (strain ATCC 204508 / S288c) (Baker's yeast), this protein is Assembly-complementing factor 4 (ACF4).